A 384-amino-acid polypeptide reads, in one-letter code: Sodium channel protein Nach (384 aa).

Residues 1–319 lie on the Extracellular side of the membrane; the sequence is AAFAYFSGFM…LVSHLGSAFS (319 aa). N-linked (GlcNAc...) asparagine glycans are attached at residues N32 and N215. A helical membrane pass occupies residues 320-340; that stretch reads LFVGMSMLSLVEIIYYFTVIL. Topologically, residues 341–384 are cytoplasmic; that stretch reads RRNYVQECRARQKLQTLHRRPNFGWPGDKNSNQQKSVFYIRGRN.

Belongs to the amiloride-sensitive sodium channel (TC 1.A.6) family.

It localises to the membrane. In terms of biological role, part of a complex that plays a role in tracheal liquid clearance. Probable role in sodium transport. In Drosophila virilis (Fruit fly), this protein is Sodium channel protein Nach (Nach).